Reading from the N-terminus, the 145-residue chain is D-aminoacyl-tRNA deacylase (145 aa).

The Gly-cisPro motif, important for rejection of L-amino acids motif lies at 137 to 138 (GP).

This sequence belongs to the DTD family. As to quaternary structure, homodimer.

It is found in the cytoplasm. It catalyses the reaction glycyl-tRNA(Ala) + H2O = tRNA(Ala) + glycine + H(+). The enzyme catalyses a D-aminoacyl-tRNA + H2O = a tRNA + a D-alpha-amino acid + H(+). In terms of biological role, an aminoacyl-tRNA editing enzyme that deacylates mischarged D-aminoacyl-tRNAs. Also deacylates mischarged glycyl-tRNA(Ala), protecting cells against glycine mischarging by AlaRS. Acts via tRNA-based rather than protein-based catalysis; rejects L-amino acids rather than detecting D-amino acids in the active site. By recycling D-aminoacyl-tRNA to D-amino acids and free tRNA molecules, this enzyme counteracts the toxicity associated with the formation of D-aminoacyl-tRNA entities in vivo and helps enforce protein L-homochirality. The sequence is that of D-aminoacyl-tRNA deacylase from Dinoroseobacter shibae (strain DSM 16493 / NCIMB 14021 / DFL 12).